The sequence spans 583 residues: Exonuclease 3'-5' domain-containing protein 2 (583 aa).

At 1–11 (MTRESAVATKR) the chain is on the mitochondrial intermembrane side. A helical membrane pass occupies residues 12-29 (NWAILAAGVGLVYVLVRH). The Cytoplasmic portion of the chain corresponds to 30 to 583 (RHRLLCPLRR…AGLDAKIKET (554 aa)). Residues 62 to 228 (TTQWVLNELK…AIYQKLCRDL (167 aa)) form the 3'-5' exonuclease domain. Residues Asp83, Glu85, and Asp213 each coordinate a divalent metal cation. A compositionally biased stretch (polar residues) spans 266-281 (GSGVTRSKGSTQSKSN). Residues 266–286 (GSGVTRSKGSTQSKSNKWVPK) form a disordered region.

This sequence belongs to the EXD2 family. Homodimer. The cofactor is Mg(2+). Requires Mn(2+) as cofactor.

The protein localises to the mitochondrion membrane. In terms of biological role, 3'-5' exoribonuclease required for mitochondrial metabolism. The sequence is that of Exonuclease 3'-5' domain-containing protein 2 from Drosophila melanogaster (Fruit fly).